A 208-amino-acid chain; its full sequence is GTP-binding protein YPTM1 (208 aa).

Residues 15–23, 33–40, 63–67, 121–124, and 151–153 each bind GTP; these read GDSSVGKSC, YVDSYIST, DTAGQ, NKCD, and SAK. An Effector region motif is present at residues 37-45; sequence YISTIGVDF. Residues 189–208 form a disordered region; it reads QMKGRPIQQEQQKSSRCCST. Residues 196-208 are compositionally biased toward polar residues; sequence QQEQQKSSRCCST. Residues Cys-205 and Cys-206 are each lipidated (S-geranylgeranyl cysteine).

Belongs to the small GTPase superfamily. Rab family. In terms of tissue distribution, low levels in coleoptiles.

It is found in the cell membrane. In terms of biological role, protein transport. Probably involved in vesicular traffic. In Zea mays (Maize), this protein is GTP-binding protein YPTM1 (YPTM1).